Reading from the N-terminus, the 214-residue chain is Pyridoxine/pyridoxamine 5'-phosphate oxidase (214 aa).

Substrate is bound by residues 9–12 and lysine 67; that span reads RKNY. FMN is bound by residues 62–67, 77–78, lysine 84, and glutamine 106; these read RMVLLK and YT. Positions 124, 128, and 132 each coordinate substrate. FMN is bound by residues 141-142 and tryptophan 186; that span reads QS. 192–194 contacts substrate; it reads RLH. Arginine 196 serves as a coordination point for FMN.

Belongs to the pyridoxamine 5'-phosphate oxidase family. As to quaternary structure, homodimer. It depends on FMN as a cofactor.

It catalyses the reaction pyridoxamine 5'-phosphate + O2 + H2O = pyridoxal 5'-phosphate + H2O2 + NH4(+). The catalysed reaction is pyridoxine 5'-phosphate + O2 = pyridoxal 5'-phosphate + H2O2. Its pathway is cofactor metabolism; pyridoxal 5'-phosphate salvage; pyridoxal 5'-phosphate from pyridoxamine 5'-phosphate: step 1/1. It functions in the pathway cofactor metabolism; pyridoxal 5'-phosphate salvage; pyridoxal 5'-phosphate from pyridoxine 5'-phosphate: step 1/1. Catalyzes the oxidation of either pyridoxine 5'-phosphate (PNP) or pyridoxamine 5'-phosphate (PMP) into pyridoxal 5'-phosphate (PLP). The chain is Pyridoxine/pyridoxamine 5'-phosphate oxidase from Gloeothece citriformis (strain PCC 7424) (Cyanothece sp. (strain PCC 7424)).